Reading from the N-terminus, the 899-residue chain is Valine--tRNA ligase (899 aa).

A 'HIGH' region motif is present at residues 58-68 (PNVTGVLHIGH). A 'KMSKS' region motif is present at residues 544 to 548 (KMSKS). Lys-547 provides a ligand contact to ATP. A coiled-coil region spans residues 836-898 (GTRLHNQRQK…NAELIALGLQ (63 aa)).

Belongs to the class-I aminoacyl-tRNA synthetase family. ValS type 1 subfamily. In terms of assembly, monomer.

Its subcellular location is the cytoplasm. It catalyses the reaction tRNA(Val) + L-valine + ATP = L-valyl-tRNA(Val) + AMP + diphosphate. Functionally, catalyzes the attachment of valine to tRNA(Val). As ValRS can inadvertently accommodate and process structurally similar amino acids such as threonine, to avoid such errors, it has a 'posttransfer' editing activity that hydrolyzes mischarged Thr-tRNA(Val) in a tRNA-dependent manner. This Helicobacter hepaticus (strain ATCC 51449 / 3B1) protein is Valine--tRNA ligase.